Reading from the N-terminus, the 60-residue chain is Large ribosomal subunit protein bL32 (60 aa).

It belongs to the bacterial ribosomal protein bL32 family.

This Thermosipho africanus (strain TCF52B) protein is Large ribosomal subunit protein bL32.